The sequence spans 35 residues: Photosystem II reaction center protein T (35 aa).

The helical transmembrane segment at 3–23 threads the bilayer; the sequence is SVAYILILTLAIGVLFFAIAF.

This sequence belongs to the PsbT family. In terms of assembly, PSII is composed of 1 copy each of membrane proteins PsbA, PsbB, PsbC, PsbD, PsbE, PsbF, PsbH, PsbI, PsbJ, PsbK, PsbL, PsbM, PsbT, PsbX, PsbY, PsbZ, Psb30/Ycf12, peripheral proteins PsbO, CyanoQ (PsbQ), PsbU, PsbV and a large number of cofactors. It forms dimeric complexes.

It localises to the cellular thylakoid membrane. In terms of biological role, found at the monomer-monomer interface of the photosystem II (PS II) dimer, plays a role in assembly and dimerization of PSII. PSII is a light-driven water plastoquinone oxidoreductase, using light energy to abstract electrons from H(2)O, generating a proton gradient subsequently used for ATP formation. This chain is Photosystem II reaction center protein T, found in Nostoc sp. (strain PCC 7120 / SAG 25.82 / UTEX 2576).